A 426-amino-acid chain; its full sequence is 3-phosphoshikimate 1-carboxyvinyltransferase (426 aa).

K22, S23, and R27 together coordinate 3-phosphoshikimate. Residue K22 participates in phosphoenolpyruvate binding. Residues G96 and R124 each contribute to the phosphoenolpyruvate site. 3-phosphoshikimate is bound by residues S170, S171, Q172, S198, D314, N337, and K341. A phosphoenolpyruvate-binding site is contributed by Q172. D314 functions as the Proton acceptor in the catalytic mechanism. Residues R345, R387, and K412 each contribute to the phosphoenolpyruvate site.

It belongs to the EPSP synthase family. As to quaternary structure, monomer.

The protein localises to the cytoplasm. It carries out the reaction 3-phosphoshikimate + phosphoenolpyruvate = 5-O-(1-carboxyvinyl)-3-phosphoshikimate + phosphate. Its pathway is metabolic intermediate biosynthesis; chorismate biosynthesis; chorismate from D-erythrose 4-phosphate and phosphoenolpyruvate: step 6/7. In terms of biological role, catalyzes the transfer of the enolpyruvyl moiety of phosphoenolpyruvate (PEP) to the 5-hydroxyl of shikimate-3-phosphate (S3P) to produce enolpyruvyl shikimate-3-phosphate and inorganic phosphate. The polypeptide is 3-phosphoshikimate 1-carboxyvinyltransferase (Colwellia psychrerythraea (strain 34H / ATCC BAA-681) (Vibrio psychroerythus)).